Here is a 176-residue protein sequence, read N- to C-terminus: Probable DNA-directed RNA polymerase subunit delta (176 aa).

Residues 14 to 81 (CSMIEVVHSV…GENRWGLRSW (68 aa)) form the HTH HARE-type domain. The disordered stretch occupies residues 91–176 (ILPQPKPKKK…ETEEEEEEEL (86 aa)). A compositionally biased stretch (acidic residues) spans 106 to 176 (DGFDDYIEED…ETEEEEEEEL (71 aa)).

It belongs to the RpoE family. RNAP is composed of a core of 2 alpha, a beta and a beta' subunits. The core is associated with a delta subunit and one of several sigma factors.

Its function is as follows. Participates in both the initiation and recycling phases of transcription. In the presence of the delta subunit, RNAP displays an increased specificity of transcription, a decreased affinity for nucleic acids, and an increased efficiency of RNA synthesis because of enhanced recycling. The protein is Probable DNA-directed RNA polymerase subunit delta of Bacillus thuringiensis (strain Al Hakam).